We begin with the raw amino-acid sequence, 484 residues long: Polyamine oxidase 3 (484 aa).

Glutamate 47, arginine 55, valine 236, and glutamate 423 together coordinate FAD. Positions 482–484 match the Microbody targeting signal motif; that stretch reads SRL.

The protein belongs to the flavin monoamine oxidase family. Requires FAD as cofactor. In terms of tissue distribution, widely expressed.

Its subcellular location is the peroxisome. It carries out the reaction spermine + O2 + H2O = 3-aminopropanal + spermidine + H2O2. It catalyses the reaction N(1)-acetylspermine + O2 + H2O = 3-acetamidopropanal + spermidine + H2O2. The catalysed reaction is norspermine + O2 + H2O = norspermidine + 3-aminopropanal + H2O2. The enzyme catalyses spermidine + O2 + H2O = 3-aminopropanal + putrescine + H2O2. It carries out the reaction thermospermine + O2 + H2O = 3-aminopropanal + spermidine + H2O2. It participates in amine and polyamine degradation; spermine degradation. It functions in the pathway amine and polyamine degradation; spermidine degradation. Its function is as follows. Flavoenzyme involved in polyamine back-conversion. Catalyzes the oxidation of the secondary amino group of polyamines, such as spermine, spermidine and their acetyl derivatives. Substrate preference is spermidine &gt; norspermine &gt; thermospermine &gt; N(1)-acetylspermine &gt; spermine. No activity detected when putrescine is used as substrate. Plays an important role in the regulation of polyamine intracellular concentration. The protein is Polyamine oxidase 3 of Oryza sativa subsp. japonica (Rice).